The sequence spans 112 residues: Nitrogen regulatory protein P-II (112 aa).

Tyrosine 51 carries the O-UMP-tyrosine modification.

It belongs to the P(II) protein family. Homotrimer.

In nitrogen-limiting conditions, when the ratio of Gln to 2-ketoglutarate decreases, P-II is uridylylated to P-II-UMP. P-II-UMP allows the deadenylation of glutamine synthetase (GS), thus activating the enzyme. Conversely, in nitrogen excess P-II is deuridylated and promotes the adenylation of GS. P-II indirectly controls the transcription of the GS gene (glnA). P-II prevents NR-II-catalyzed conversion of NR-I to NR-I-phosphate, the transcriptional activator of glnA. When P-II is uridylylated to P-II-UMP, these events are reversed. In Rhizobium meliloti (strain 1021) (Ensifer meliloti), this protein is Nitrogen regulatory protein P-II (glnB).